The primary structure comprises 181 residues: Adenine phosphoribosyltransferase (181 aa).

It belongs to the purine/pyrimidine phosphoribosyltransferase family. In terms of assembly, homodimer.

It is found in the cytoplasm. It carries out the reaction AMP + diphosphate = 5-phospho-alpha-D-ribose 1-diphosphate + adenine. It participates in purine metabolism; AMP biosynthesis via salvage pathway; AMP from adenine: step 1/1. In terms of biological role, catalyzes a salvage reaction resulting in the formation of AMP, that is energically less costly than de novo synthesis. The polypeptide is Adenine phosphoribosyltransferase (Neorhizobium galegae (Rhizobium galegae)).